We begin with the raw amino-acid sequence, 225 residues long: Redox-sensing transcriptional repressor Rex (225 aa).

Residues 16–55 (IYYRYLNILLDADKKRVSSTELSEAVKVDSATIRRDFSYF) constitute a DNA-binding region (H-T-H motif). Position 90-95 (90-95 (GVGNLG)) interacts with NAD(+).

Belongs to the transcriptional regulatory Rex family. As to quaternary structure, homodimer.

It localises to the cytoplasm. Its function is as follows. Modulates transcription in response to changes in cellular NADH/NAD(+) redox state. In Lactiplantibacillus plantarum (strain ATCC BAA-793 / NCIMB 8826 / WCFS1) (Lactobacillus plantarum), this protein is Redox-sensing transcriptional repressor Rex.